Reading from the N-terminus, the 847-residue chain is B-cell receptor CD22 (847 aa).

The signal sequence occupies residues 1-19 (MHLLGPWLLLLVLEYLAFS). The Ig-like V-type domain occupies 20 to 138 (DSSKWAFEHP…MERIHLNVSE (119 aa)). The Extracellular segment spans residues 20-687 (DSSKWAFEHP…YYSPETIGRR (668 aa)). N-linked (GlcNAc...) asparagine glycosylation is found at N67, N101, and N112. R120 is a binding site for N-acetylneuraminate. N-linked (GlcNAc...) asparagine glycosylation is found at N135, N164, and N231. 6 consecutive Ig-like C2-type domains span residues 143-235 (PHIQ…DTVQ), 242-326 (PKLE…VFLQ), 331-416 (PEPS…LDVQ), 419-500 (PKKV…VALN), 505-582 (PRDV…QTAS), and 593-676 (PRRL…STLT). Residues C161 and C219 are joined by a disulfide bond. Cystine bridges form between C265/C309 and C353/C396. 5 N-linked (GlcNAc...) asparagine glycosylation sites follow: N363, N428, N445, N448, and N479. Intrachain disulfides connect C442–C484 and C529–C571. N-linked (GlcNAc...) asparagine glycans are attached at residues N574 and N634. Residues C616 and C659 are joined by a disulfide bond. Residues 688-708 (VAVGFGSCLAILILAICGLKL) traverse the membrane as a helical segment. The Cytoplasmic portion of the chain corresponds to 709–847 (QRRWKRTQSQ…ENVDYVILKH (139 aa)). 3 positions are modified to phosphoserine: S725, S726, and S729. 2 short sequence motifs (ITIM motif) span residues 760-765 (ISYTTL) and 794-799 (VTYSVL). Residue Y762 is modified to Phosphotyrosine. Phosphotyrosine occurs at positions 807, 822, and 842. 2 consecutive short sequence motifs (ITIM motif) follow at residues 820-825 (IHYSEL) and 840-845 (VDYVIL).

It belongs to the immunoglobulin superfamily. SIGLEC (sialic acid binding Ig-like lectin) family. In terms of assembly, predominantly monomer of isoform CD22-beta. Also found as heterodimer of isoform CD22-beta and a shorter isoform. Interacts with PTPN6/SHP-1, LYN, SYK, PIK3R1/PIK3R2 and PLCG1 upon phosphorylation. Interacts with GRB2, INPP5D and SHC1 upon phosphorylation. May form a complex with INPP5D/SHIP, GRB2 and SHC1. In terms of processing, phosphorylation of Tyr-762, Tyr-807 and Tyr-822 are involved in binding to SYK, GRB2 and SYK, respectively. Phosphorylation of Tyr-842 is involved in binding to SYK, PLCG2 and PIK3R1/PIK3R2. Phosphorylated on tyrosine residues by LYN.

The protein resides in the cell membrane. In terms of biological role, most highly expressed siglec (sialic acid-binding immunoglobulin-like lectin) on B-cells that plays a role in various aspects of B-cell biology including differentiation, antigen presentation, and trafficking to bone marrow. Binds to alpha 2,6-linked sialic acid residues of surface molecules such as CD22 itself, CD45 and IgM in a cis configuration. Can also bind to ligands on other cells as an adhesion molecule in a trans configuration. Acts as an inhibitory coreceptor on the surface of B-cells and inhibits B-cell receptor induced signaling, characterized by inhibition of the calcium mobilization and cellular activation. Mechanistically, the immunoreceptor tyrosine-based inhibitory motif domain is phosphorylated by the Src kinase LYN, which in turn leads to the recruitment of the protein tyrosine phosphatase 1/PTPN6, leading to the negative regulation of BCR signaling. If this negative signaling from is of sufficient strength, apoptosis of the B-cell can be induced. This chain is B-cell receptor CD22, found in Pan troglodytes (Chimpanzee).